Here is a 413-residue protein sequence, read N- to C-terminus: Azaphilone biosynthesis cluster protein M (413 aa).

The span at 123 to 138 (STQPDQVQPNQPTPSF) shows a compositional bias: polar residues. Positions 123–145 (STQPDQVQPNQPTPSFESAAGAS) are disordered.

Its pathway is secondary metabolite biosynthesis. Part of the gene cluster that mediates the biosynthesis of azaterrilone A and other azaphilones, a class of fungal metabolites characterized by a highly oxygenated pyrano-quinone bicyclic core and exhibiting a broad range of bioactivities. The first step of the pathway begins with the non-reducing polyketide synthase tazA that assembles one acetyl-CoA starter unit, five malonyl-CoA units, and catalyzes a series of Claisen condensations, methylation, PT-mediated cyclization, and finally releases the first hexaketide precursor through the R-domain. The tazA product then undergoes reduction on its terminal ketone and the following pyran-ring formation by yet undetermined enzyme(s). Dehydration and enoyl reduction, possibly involving the trans-enoyl reductase tazE leads to the next intermediate. TazD is predicted as an acetyltransferase and might catalyze the acetylation steps leading to the synthesis of azaterrilone A. Azaterrilone A is not the final product of the taz pathway and both the highly reducing polyketide synthase tazB and the dual enzyme tazHJ catalyze late steps of the pathway, leading to the production of the 2 final stereoisomers that contain additional polyketide modification whose structures have still to be determined. The polypeptide is Azaphilone biosynthesis cluster protein M (Aspergillus terreus (strain NIH 2624 / FGSC A1156)).